A 229-amino-acid polypeptide reads, in one-letter code: Putative N-acetylmannosamine-6-phosphate 2-epimerase (229 aa).

The protein belongs to the NanE family.

It carries out the reaction an N-acyl-D-glucosamine 6-phosphate = an N-acyl-D-mannosamine 6-phosphate. Its pathway is amino-sugar metabolism; N-acetylneuraminate degradation; D-fructose 6-phosphate from N-acetylneuraminate: step 3/5. Functionally, converts N-acetylmannosamine-6-phosphate (ManNAc-6-P) to N-acetylglucosamine-6-phosphate (GlcNAc-6-P). In Pediococcus pentosaceus (strain ATCC 25745 / CCUG 21536 / LMG 10740 / 183-1w), this protein is Putative N-acetylmannosamine-6-phosphate 2-epimerase.